A 199-amino-acid polypeptide reads, in one-letter code: MKFSPLVDELIQSLKCLPGVGPKSAQRMAFQLLERDRKAGQSLASALSSAMSDVGHCQACRTFTEETLCPICASHKRGNSEVICVVETPADVLAIEAGGHFSGRYFVLLGHLSPLDGVGPEELGLSLLEAHLASGEVSELILATNPTVEGDATAHFIADMAKGHQVSVSRIAHGVPVGGELEYVDSTTLALSFNGRLPL.

The C4-type zinc-finger motif lies at 57 to 72 (CQACRTFTEETLCPIC). Positions 81 to 176 (EVICVVETPA…SVSRIAHGVP (96 aa)) constitute a Toprim domain.

This sequence belongs to the RecR family.

In terms of biological role, may play a role in DNA repair. It seems to be involved in an RecBC-independent recombinational process of DNA repair. It may act with RecF and RecO. The chain is Recombination protein RecR from Shewanella woodyi (strain ATCC 51908 / MS32).